Reading from the N-terminus, the 387-residue chain is Intraflagellar transport protein 57 (387 aa).

It belongs to the IFT57 family.

The protein resides in the cell projection. It is found in the cilium. It localises to the flagellum. Its subcellular location is the cytoplasm. The protein localises to the cytoskeleton. The protein resides in the flagellum axoneme. It is found in the flagellum basal body. Its function is as follows. Component of the intraflagellar transport complex B (IFT-B) involved in flagellar assembly. The chain is Intraflagellar transport protein 57 from Giardia intestinalis (strain ATCC 50803 / WB clone C6) (Giardia lamblia).